The sequence spans 959 residues: Translation initiation factor IF-2 (959 aa).

Residues 1–10 are compositionally biased toward basic and acidic residues; it reads MSDKTNDDKT. Residues 1 to 374 are disordered; that stretch reads MSDKTNDDKT…SQMQETREKI (374 aa). Polar residues predominate over residues 27 to 37; sequence EQSTVRQNFSH. Low complexity-rich tracts occupy residues 63–118 and 128–138; these read AAAA…VTKP and QRPGGQQAQRP. Composition is skewed to basic and acidic residues over residues 154 to 225 and 232 to 241; these read SEMD…EAAK and ARSERRDDAR. Positions 246-284 are enriched in low complexity; the sequence is GARPQQAGRPQGGRPQPAGRPQQGSPRPAPIIADAAPIA. Over residues 318-333 the composition is skewed to basic and acidic residues; sequence PEVRAPKVVKGEDDRR. One can recognise a tr-type G domain in the interval 457 to 626; the sequence is SRPPVVTIMG…LLQAEMLDLK (170 aa). Residues 466–473 form a G1 region; sequence GHVDHGKT. A GTP-binding site is contributed by 466–473; that stretch reads GHVDHGKT. Residues 491-495 form a G2 region; that stretch reads GITQH. A G3 region spans residues 512 to 515; that stretch reads DTPG. Residues 512 to 516 and 566 to 569 contribute to the GTP site; these read DTPGH and NKID. A G4 region spans residues 566-569; that stretch reads NKID. The segment at 602 to 604 is G5; sequence SAK.

It belongs to the TRAFAC class translation factor GTPase superfamily. Classic translation factor GTPase family. IF-2 subfamily.

The protein localises to the cytoplasm. In terms of biological role, one of the essential components for the initiation of protein synthesis. Protects formylmethionyl-tRNA from spontaneous hydrolysis and promotes its binding to the 30S ribosomal subunits. Also involved in the hydrolysis of GTP during the formation of the 70S ribosomal complex. The chain is Translation initiation factor IF-2 from Brucella melitensis biotype 1 (strain ATCC 23456 / CCUG 17765 / NCTC 10094 / 16M).